Reading from the N-terminus, the 396-residue chain is Elongation factor Tu (396 aa).

In terms of domain architecture, tr-type G spans 10 to 206 (KAHVNIGTIG…AVDEYIPDPV (197 aa)). Residues 19–26 (GHVDHGKT) form a G1 region. Position 19-26 (19-26 (GHVDHGKT)) interacts with GTP. T26 serves as a coordination point for Mg(2+). Residues 62-66 (GITIN) are G2. The G3 stretch occupies residues 83-86 (DAPG). GTP is bound by residues 83 to 87 (DAPGH) and 138 to 141 (NKSD). A G4 region spans residues 138–141 (NKSD). The interval 176–178 (SAL) is G5.

Belongs to the TRAFAC class translation factor GTPase superfamily. Classic translation factor GTPase family. EF-Tu/EF-1A subfamily. Monomer.

It localises to the cytoplasm. It catalyses the reaction GTP + H2O = GDP + phosphate + H(+). In terms of biological role, GTP hydrolase that promotes the GTP-dependent binding of aminoacyl-tRNA to the A-site of ribosomes during protein biosynthesis. This chain is Elongation factor Tu, found in Micrococcus luteus (Micrococcus lysodeikticus).